A 249-amino-acid polypeptide reads, in one-letter code: Serine 3-dehydrogenase (249 aa).

Position 6-30 (6-30) interacts with NADP(+); it reads LITGATSGFGQATARRFVKEGWKVI. Ser135 is a substrate binding site. The Proton acceptor role is filled by Tyr148.

It belongs to the short-chain dehydrogenases/reductases (SDR) family. In terms of assembly, homotetramer.

The enzyme catalyses L-serine + NADP(+) = aminoacetaldehyde + CO2 + NADPH. Its function is as follows. Catalyzes the oxidation of the hydroxyl group of serine to form 2-aminomalonate semialdehyde which is spontaneously converted into 2-aminoacetaldehyde and CO(2). Also acts on D-serine, L-glycerate, D-glycerate and 2-methyl-DL-serine. Does not act on O-methyl-DL-serine and L-threonine. This Agrobacterium fabrum (strain C58 / ATCC 33970) (Agrobacterium tumefaciens (strain C58)) protein is Serine 3-dehydrogenase (sdh).